Here is a 1108-residue protein sequence, read N- to C-terminus: DNA-directed RNA polymerase subunit beta (1108 aa).

The protein belongs to the RNA polymerase beta chain family. As to quaternary structure, in plastids the minimal PEP RNA polymerase catalytic core is composed of four subunits: alpha, beta, beta', and beta''. When a (nuclear-encoded) sigma factor is associated with the core the holoenzyme is formed, which can initiate transcription.

Its subcellular location is the plastid. It is found in the chloroplast. It catalyses the reaction RNA(n) + a ribonucleoside 5'-triphosphate = RNA(n+1) + diphosphate. In terms of biological role, DNA-dependent RNA polymerase catalyzes the transcription of DNA into RNA using the four ribonucleoside triphosphates as substrates. In Gnetum parvifolium (Small-leaved jointfir), this protein is DNA-directed RNA polymerase subunit beta.